The chain runs to 464 residues: 3-deoxy-D-manno-octulosonic acid transferase (464 aa).

The helical; Signal-anchor transmembrane segment at 2–22 (MLLYYALSFILLPIYFIIILI) threads the bilayer. An RPE1 insert domain is found at 47-93 (YSLDFLHNEANKERFKGDTERRTAAYTSVREDSSTGSTSKLPLEASY). Glutamate 107 serves as the catalytic Proton acceptor. Residues 311 to 312 (PR), 352 to 354 (FGE), and 377 to 380 (NILE) contribute to the CMP site.

This sequence belongs to the glycosyltransferase group 1 family.

It localises to the cell inner membrane. The catalysed reaction is lipid IVA (E. coli) + CMP-3-deoxy-beta-D-manno-octulosonate = alpha-Kdo-(2-&gt;6)-lipid IVA (E. coli) + CMP + H(+). Its pathway is bacterial outer membrane biogenesis; LPS core biosynthesis. Functionally, involved in lipopolysaccharide (LPS) biosynthesis. Catalyzes the transfer of 3-deoxy-D-manno-octulosonate (Kdo) residue(s) from CMP-Kdo to lipid IV(A), the tetraacyldisaccharide-1,4'-bisphosphate precursor of lipid A. This chain is 3-deoxy-D-manno-octulosonic acid transferase (waaA), found in Rickettsia felis (strain ATCC VR-1525 / URRWXCal2) (Rickettsia azadi).